The following is a 216-amino-acid chain: Probable GH family 25 lysozyme 5 (216 aa).

The N-terminal stretch at 1-20 is a signal peptide; the sequence is MRFIISLLFVFTLIFNLAFS. The Ch-type lysozyme domain occupies 21-216; it reads HIGIDVSSGT…GLGIDKNYWE (196 aa). The active site involves D25. N31 carries an N-linked (GlcNAc...) asparagine glycan. Residues D113 and E115 contribute to the active site.

This sequence belongs to the glycosyl hydrolase 25 family.

It is found in the secreted. It carries out the reaction Hydrolysis of (1-&gt;4)-beta-linkages between N-acetylmuramic acid and N-acetyl-D-glucosamine residues in a peptidoglycan and between N-acetyl-D-glucosamine residues in chitodextrins.. The chain is Probable GH family 25 lysozyme 5 from Dictyostelium discoideum (Social amoeba).